We begin with the raw amino-acid sequence, 82 residues long: Small ribosomal subunit protein uS17 (82 aa).

The protein belongs to the universal ribosomal protein uS17 family. Part of the 30S ribosomal subunit.

Functionally, one of the primary rRNA binding proteins, it binds specifically to the 5'-end of 16S ribosomal RNA. This Sulfurimonas denitrificans (strain ATCC 33889 / DSM 1251) (Thiomicrospira denitrificans (strain ATCC 33889 / DSM 1251)) protein is Small ribosomal subunit protein uS17.